The following is a 285-amino-acid chain: Aspartate/glutamate leucyltransferase (285 aa).

Belongs to the R-transferase family. Bpt subfamily.

Its subcellular location is the cytoplasm. It carries out the reaction N-terminal L-glutamyl-[protein] + L-leucyl-tRNA(Leu) = N-terminal L-leucyl-L-glutamyl-[protein] + tRNA(Leu) + H(+). The enzyme catalyses N-terminal L-aspartyl-[protein] + L-leucyl-tRNA(Leu) = N-terminal L-leucyl-L-aspartyl-[protein] + tRNA(Leu) + H(+). Functionally, functions in the N-end rule pathway of protein degradation where it conjugates Leu from its aminoacyl-tRNA to the N-termini of proteins containing an N-terminal aspartate or glutamate. The sequence is that of Aspartate/glutamate leucyltransferase from Dinoroseobacter shibae (strain DSM 16493 / NCIMB 14021 / DFL 12).